A 236-amino-acid chain; its full sequence is Small ribosomal subunit protein uS2c (236 aa).

This sequence belongs to the universal ribosomal protein uS2 family.

It localises to the plastid. The protein resides in the chloroplast. The protein is Small ribosomal subunit protein uS2c (rps2) of Eucalyptus globulus subsp. globulus (Tasmanian blue gum).